We begin with the raw amino-acid sequence, 401 residues long: Nicotinate phosphoribosyltransferase (401 aa).

Histidine 221 carries the post-translational modification Phosphohistidine; by autocatalysis.

Belongs to the NAPRTase family. Post-translationally, transiently phosphorylated on a His residue during the reaction cycle. Phosphorylation strongly increases the affinity for substrates and increases the rate of nicotinate D-ribonucleotide production. Dephosphorylation regenerates the low-affinity form of the enzyme, leading to product release.

The enzyme catalyses nicotinate + 5-phospho-alpha-D-ribose 1-diphosphate + ATP + H2O = nicotinate beta-D-ribonucleotide + ADP + phosphate + diphosphate. The protein operates within cofactor biosynthesis; NAD(+) biosynthesis; nicotinate D-ribonucleotide from nicotinate: step 1/1. Its function is as follows. Catalyzes the synthesis of beta-nicotinate D-ribonucleotide from nicotinate and 5-phospho-D-ribose 1-phosphate at the expense of ATP. The sequence is that of Nicotinate phosphoribosyltransferase from Yersinia enterocolitica serotype O:8 / biotype 1B (strain NCTC 13174 / 8081).